Here is a 234-residue protein sequence, read N- to C-terminus: Uridylate kinase (234 aa).

9-12 provides a ligand contact to ATP; that stretch reads KLSG. Glycine 51 contributes to the UMP binding site. ATP-binding residues include glycine 52 and arginine 56. Residues aspartate 71 and 132-139 each bind UMP; that span reads CGNPFFTT. ATP contacts are provided by threonine 159, tyrosine 165, and aspartate 168.

Belongs to the UMP kinase family. In terms of assembly, homohexamer.

The protein resides in the cytoplasm. The catalysed reaction is UMP + ATP = UDP + ADP. The protein operates within pyrimidine metabolism; CTP biosynthesis via de novo pathway; UDP from UMP (UMPK route): step 1/1. With respect to regulation, inhibited by UTP. In terms of biological role, catalyzes the reversible phosphorylation of UMP to UDP. This chain is Uridylate kinase, found in Prochlorococcus marinus (strain MIT 9215).